Reading from the N-terminus, the 352-residue chain is MAPTAVYTQKDSPSSSQPSSKGPALAIGSLETAQDGKYQSLITELEATRQVDKLLLDRLVDGATTLEPSKYNSVHVTLASSDYQSLQESTLRSLLTQLLTGLTPLGTLHLLNLTDGLKTLPSELTLSGFLVLSAAGENPGDSIVAQKPAHAIGASVSLKKRGSATTTSTTAFVTTTTTTSTSTTTATVTSAPSVPLLLRKRGDPAKKKALWALTTDASASPSTKIDADALLTAEDKARPVPTCAPVDRSAPRRKKACKNCSCGLAELEEEEKRNAPVVVIDSSIDGEGGAKAVDKAERERLLEAAKNAPKATSSCGSCFLGDAFRCAGCPYLGLPAFKPGEKVEIDFGMDDF.

Polar residues predominate over residues 1 to 11; it reads MAPTAVYTQKD. The segment at 1–24 is disordered; the sequence is MAPTAVYTQKDSPSSSQPSSKGPA. The N-terminal SAM-like domain stretch occupies residues 1–196; sequence MAPTAVYTQK…TVTSAPSVPL (196 aa). The segment at 196-237 is linker; sequence LLLRKRGDPAKKKALWALTTDASASPSTKIDADALLTAEDKA. [2Fe-2S] cluster is bound by residues C243, C257, C260, and C262. The segment at 243–262 is fe-S binding site A; the sequence is CAPVDRSAPRRKKACKNCSC. 4 residues coordinate [4Fe-4S] cluster: C315, C318, C326, and C329. Short sequence motifs (cx2C motif) lie at residues 315–318 and 326–329; these read CGSC and CAGC. The segment at 315–329 is fe-S binding site B; sequence CGSCFLGDAFRCAGC.

It belongs to the anamorsin family. Monomer. Interacts with TAH18. Interacts with MIA40. The cofactor is [2Fe-2S] cluster. [4Fe-4S] cluster is required as a cofactor.

The protein resides in the cytoplasm. It is found in the mitochondrion intermembrane space. Component of the cytosolic iron-sulfur (Fe-S) protein assembly (CIA) machinery required for the maturation of extramitochondrial Fe-S proteins. Part of an electron transfer chain functioning in an early step of cytosolic Fe-S biogenesis, facilitating the de novo assembly of a [4Fe-4S] cluster on the scaffold complex CFD1-NBP35. Electrons are transferred to DRE2 from NADPH via the FAD- and FMN-containing protein TAH18. TAH18-DRE2 are also required for the assembly of the diferric tyrosyl radical cofactor of ribonucleotide reductase (RNR), probably by providing electrons for reduction during radical cofactor maturation in the catalytic small subunit RNR2. In Coprinopsis cinerea (strain Okayama-7 / 130 / ATCC MYA-4618 / FGSC 9003) (Inky cap fungus), this protein is Fe-S cluster assembly protein DRE2.